A 238-amino-acid polypeptide reads, in one-letter code: Probable transcriptional regulatory protein SSU98_0387 (238 aa).

The protein belongs to the TACO1 family. YeeN subfamily.

It is found in the cytoplasm. The polypeptide is Probable transcriptional regulatory protein SSU98_0387 (Streptococcus suis (strain 98HAH33)).